The sequence spans 475 residues: Lipoprotein lipase (475 aa).

Positions 1-27 (MESKALLLLALAVWLQSLTASRGGVAA) are cleaved as a signal peptide. The segment at 32–53 (RDFIDIESKFALRTPEDTAEDT) is interaction with GPIHBP1. Cysteine 54 and cysteine 67 form a disulfide bridge. Asparagine 70 carries N-linked (GlcNAc...) asparagine glycosylation. Position 121 is a 3'-nitrotyrosine (tyrosine 121). Residue serine 159 is the Nucleophile of the active site. Aspartate 183 functions as the Charge relay system in the catalytic mechanism. Tyrosine 191 bears the 3'-nitrotyrosine mark. The Ca(2+) site is built by alanine 194, arginine 197, serine 199, and aspartate 202. The cysteines at positions 243 and 266 are disulfide-linked. An essential for determining substrate specificity region spans residues 243–266 (CNIGEAIRVIAERGLGDVDQLVKC). The active-site Charge relay system is histidine 268. Cystine bridges form between cysteine 291-cysteine 310 and cysteine 302-cysteine 305. The 124-residue stretch at 341–464 (FHYQVKIHFS…KGKAPAVFVK (124 aa)) folds into the PLAT domain. Tyrosine 343 is modified (3'-nitrotyrosine). N-linked (GlcNAc...) asparagine glycosylation occurs at asparagine 386. Residues 417–421 (WSDWW) are important for interaction with lipoprotein particles. Residues 430-434 (KIRVK) are important for heparin binding. The interaction with GPIHBP1 stretch occupies residues 443-467 (IFCSREKVSHLQKGKAPAVFVKCHD). Cysteine 445 and cysteine 465 form a disulfide bridge.

Belongs to the AB hydrolase superfamily. Lipase family. In terms of assembly, homodimer. Interacts with GPIHBP1 with 1:1 stoichiometry. Interacts with APOC2; the interaction activates LPL activity in the presence of lipids. Interaction with heparan sulfate proteoglycans is required to protect LPL against loss of activity. Associates with lipoprotein particles in blood plasma. Interacts with LMF1 and SEL1L; interaction with SEL1L is required to prevent aggregation of newly synthesized LPL in the endoplasmic reticulum (ER), and for normal export of LPL from the ER to the extracellular space. Interacts with SORL1; SORL1 acts as a sorting receptor, promoting LPL localization to endosomes and later to lysosomes, leading to degradation of newly synthesized LPL. Tyrosine nitration after lipopolysaccharide (LPS) challenge down-regulates the lipase activity. Highest levels in the spinal cord.

The protein resides in the cell membrane. It is found in the secreted. It localises to the extracellular space. The protein localises to the extracellular matrix. It catalyses the reaction a triacylglycerol + H2O = a diacylglycerol + a fatty acid + H(+). The enzyme catalyses a 1,2-diacyl-sn-glycero-3-phosphocholine + H2O = a 2-acyl-sn-glycero-3-phosphocholine + a fatty acid + H(+). It carries out the reaction 1,2,3-tri-(9Z-octadecenoyl)-glycerol + H2O = di-(9Z)-octadecenoylglycerol + (9Z)-octadecenoate + H(+). The catalysed reaction is 1,2-di-(9Z-octadecenoyl)-sn-glycero-3-phosphocholine + H2O = (9Z-octadecenoyl)-sn-glycero-3-phosphocholine + (9Z)-octadecenoate + H(+). It catalyses the reaction 1,2,3-tributanoylglycerol + H2O = dibutanoylglycerol + butanoate + H(+). The enzyme catalyses 1,2-dihexadecanoyl-sn-glycero-3-phosphocholine + H2O = hexadecanoyl-sn-glycero-3-phosphocholine + hexadecanoate + H(+). The apolipoprotein APOC2 acts as a coactivator of LPL activity. Ca(2+) binding promotes protein stability and formation of the active homodimer. Interaction with GPIHBP1 protects LPL against inactivation by ANGPTL4. Key enzyme in triglyceride metabolism. Catalyzes the hydrolysis of triglycerides from circulating chylomicrons and very low density lipoproteins (VLDL), and thereby plays an important role in lipid clearance from the blood stream, lipid utilization and storage. Although it has both phospholipase and triglyceride lipase activities it is primarily a triglyceride lipase with low but detectable phospholipase activity. Mediates margination of triglyceride-rich lipoprotein particles in capillaries. Recruited to its site of action on the luminal surface of vascular endothelium by binding to GPIHBP1 and cell surface heparan sulfate proteoglycans. In Papio anubis (Olive baboon), this protein is Lipoprotein lipase (LPL).